We begin with the raw amino-acid sequence, 91 residues long: Alpha-defensin-related sequence 12 (91 aa).

Residues 1-19 (MKKLVLLSAFVLLAFQVQA) form the signal peptide. The propeptide occupies 20–65 (DSIQNTDEEIKTEEQPGEENQAVSISFGDPEGYALQDAAIRRARRC). Repeat copies occupy residues 65–67 (CPP), 68–70 (CPS), 71–73 (CLS), 74–76 (CPW), 77–79 (CPR), and 83–85 (CPM). The tract at residues 65-88 (CPPCPSCLSCPWCPRCLRCPMCKC) is 6 X 3 AA tandem repeats of C-P-X.

It belongs to the alpha-defensin family. As to expression, paneth cells of the small bowel.

The protein resides in the secreted. In terms of biological role, apparent precursor of a secreted, cationic, proline- and cysteine-rich peptide that contains Cys-Pro-Xaa repeats. Unlike cryptdin, the proposed mature peptide region lacks the structural motif characteristic of defensins. It may have microbicidal activities. In Mus musculus (Mouse), this protein is Alpha-defensin-related sequence 12 (Defa-rs12).